The primary structure comprises 627 residues: DNA-directed RNA polymerase subunit gamma (627 aa).

C70, C72, C85, and C88 together coordinate Zn(2+). Mg(2+) contacts are provided by D468, D470, and D472.

Belongs to the RNA polymerase beta' chain family. RpoC1 subfamily. As to quaternary structure, in cyanobacteria the RNAP catalytic core is composed of 2 alpha, 1 beta, 1 beta', 1 gamma and 1 omega subunit. When a sigma factor is associated with the core the holoenzyme is formed, which can initiate transcription. Requires Mg(2+) as cofactor. Zn(2+) serves as cofactor.

The enzyme catalyses RNA(n) + a ribonucleoside 5'-triphosphate = RNA(n+1) + diphosphate. Its function is as follows. DNA-dependent RNA polymerase catalyzes the transcription of DNA into RNA using the four ribonucleoside triphosphates as substrates. The chain is DNA-directed RNA polymerase subunit gamma from Synechococcus sp. (strain JA-2-3B'a(2-13)) (Cyanobacteria bacterium Yellowstone B-Prime).